The chain runs to 314 residues: Melanocyte-stimulating hormone receptor (314 aa).

The Extracellular segment spans residues 1–35; the sequence is MSMLAPLRLVREPWNASEGNQSNATAGAGGAWCQG. Asparagine 15, asparagine 20, and asparagine 23 each carry an N-linked (GlcNAc...) asparagine glycan. Residues 36 to 61 traverse the membrane as a helical segment; it reads LDIPNELFLTLGLVSLVENLLVVAAI. At 62 to 70 the chain is on the cytoplasmic side; sequence LKNRNLHSP. The chain crosses the membrane as a helical span at residues 71-91; that stretch reads TYYFICCLAVSDMLVSVSNLA. Residues 92–116 lie on the Extracellular side of the membrane; that stretch reads KTLFMLLMEHGVLVIRASIVRHMDN. A helical transmembrane segment spans residues 117–138; it reads VIDMLICSSVVSSLSFLGVIAV. Topologically, residues 139 to 161 are cytoplasmic; it reads DRYITIFYALRYHSIMTLQRAVV. The chain crosses the membrane as a helical span at residues 162 to 181; sequence TMASVWLASTVSSTVLITYY. The Extracellular segment spans residues 182–189; sequence RNNAILLC. The chain crosses the membrane as a helical span at residues 190 to 209; the sequence is LIGFFLFMLVLMLVLYIHMF. Over 210 to 237 the chain is Cytoplasmic; sequence ALACHHVRSISSQQKQPTIYRTSSLKGA. The helical transmembrane segment at 238-263 threads the bilayer; sequence VTLTILLGVFFICWGPFFFHLILIVT. At 264–276 the chain is on the extracellular side; that stretch reads CPTNPFCTCFFSY. A helical membrane pass occupies residues 277 to 297; that stretch reads FNLFLILIICNSVVDPLIYAF. At 298 to 314 the chain is on the cytoplasmic side; it reads RSQELRRTLREVVLCSW. Residue cysteine 312 is the site of S-palmitoyl cysteine attachment.

It belongs to the G-protein coupled receptor 1 family.

It is found in the cell membrane. Its function is as follows. Receptor for MSH (alpha, beta and gamma) and ACTH. The activity of this receptor is mediated by G proteins which activate adenylate cyclase. Mediates melanogenesis via regulation of cAMP signaling in melanocytes. The chain is Melanocyte-stimulating hormone receptor (MC1R) from Gallus gallus (Chicken).